The primary structure comprises 457 residues: Vasoactive intestinal polypeptide receptor (457 aa).

The signal sequence occupies residues Met-1–Gly-19. Residues Gly-20 to Val-141 lie on the Extracellular side of the membrane. 3 disulfides stabilise this stretch: Cys-51–Cys-73, Cys-64–Cys-105, and Cys-87–Cys-122. N-linked (GlcNAc...) asparagine glycans are attached at residues Asn-59, Asn-70, Asn-100, and Asn-104. The helical transmembrane segment at Lys-142 to Phe-166 threads the bilayer. At Arg-167–Arg-173 the chain is on the cytoplasmic side. The chain crosses the membrane as a helical span at residues Asn-174–Ile-193. Over Lys-194 to Lys-215 the chain is Extracellular. A disulfide bridge links Cys-214 with Cys-284. Residues Ala-216–Leu-239 traverse the membrane as a helical segment. Residues His-240–Tyr-253 are Cytoplasmic-facing. Residues Phe-254–Val-275 traverse the membrane as a helical segment. At Arg-276 to Pro-292 the chain is on the extracellular side. Residues Ile-293–Ile-316 traverse the membrane as a helical segment. Residues Arg-317–Lys-341 lie on the Cytoplasmic side of the membrane. The chain crosses the membrane as a helical span at residues Ser-342–Pro-361. The Extracellular portion of the chain corresponds to Asp-362–Glu-373. The helical transmembrane segment at Leu-374 to Gly-393 threads the bilayer. The Cytoplasmic segment spans residues Glu-394 to Val-457.

Belongs to the G-protein coupled receptor 2 family. Expressed in pituitary, hypothalamus, small intestine and ovarian follicles.

The protein localises to the cell membrane. Its function is as follows. This is a receptor for VIP. The activity of this receptor is mediated by G proteins which activate adenylyl cyclase. This is Vasoactive intestinal polypeptide receptor (VIPR1) from Meleagris gallopavo (Wild turkey).